The sequence spans 191 residues: Thioredoxin F-type, chloroplastic (191 aa).

In terms of domain architecture, Thioredoxin spans 68-190 (KASLETAVGA…LVAAIEAARS (123 aa)). Active-site nucleophile residues include cysteine 115 and cysteine 118. Cysteine 115 and cysteine 118 are disulfide-bonded.

Belongs to the thioredoxin family. Plant F-type subfamily. As to quaternary structure, forms a complex with heterodimeric ferredoxin-thioredoxin reductase (FTR) and ferredoxin.

The protein resides in the plastid. It localises to the chloroplast. Participates in various redox reactions through the reversible oxidation of the active center dithiol to a disulfide. The F form is known to activate a number of enzymes of the photosynthetic carbon cycle. The chain is Thioredoxin F-type, chloroplastic from Mesembryanthemum crystallinum (Common ice plant).